A 164-amino-acid polypeptide reads, in one-letter code: N5-carboxyaminoimidazole ribonucleotide mutase (164 aa).

Substrate is bound by residues serine 13, aspartate 16, and arginine 43.

This sequence belongs to the AIR carboxylase family. Class I subfamily.

The catalysed reaction is 5-carboxyamino-1-(5-phospho-D-ribosyl)imidazole + H(+) = 5-amino-1-(5-phospho-D-ribosyl)imidazole-4-carboxylate. It participates in purine metabolism; IMP biosynthesis via de novo pathway; 5-amino-1-(5-phospho-D-ribosyl)imidazole-4-carboxylate from 5-amino-1-(5-phospho-D-ribosyl)imidazole (N5-CAIR route): step 2/2. Catalyzes the conversion of N5-carboxyaminoimidazole ribonucleotide (N5-CAIR) to 4-carboxy-5-aminoimidazole ribonucleotide (CAIR). This chain is N5-carboxyaminoimidazole ribonucleotide mutase, found in Haemophilus influenzae (strain ATCC 51907 / DSM 11121 / KW20 / Rd).